The chain runs to 539 residues: SAGA complex/transcription factor TFIID complex subunit TAF12 (539 aa).

2 disordered regions span residues 1-28 (MSSN…TGAQ) and 86-129 (QQAA…RNNS). Ser-2 carries the post-translational modification N-acetylserine. Low complexity-rich tracts occupy residues 7–27 (NSGV…ITGA) and 87–105 (QAAQ…NPAS). At Ser-129 the chain carries Phosphoserine. Coiled-coil stretches lie at residues 153-202 (QNFQ…LLND) and 239-285 (LQES…QRKI). Residues 274 to 283 (QQQRQGQNQR) show a composition bias toward low complexity. The disordered stretch occupies residues 274–332 (QQQRQGQNQRKISSSNSTEIPSVTGPDALKSQQQQQNTITATNNPRGNVNTSQTEQSKA). Composition is skewed to polar residues over residues 284 to 294 (KISSSNSTEIP) and 310 to 332 (NTIT…QSKA). A Phosphoserine modification is found at Ser-286. A Histone-fold domain is found at 413–490 (RVMSKRKLRE…HLERNWNIRI (78 aa)).

This sequence belongs to the TAF12 family. In terms of assembly, component of the 1.8 MDa SAGA (Spt-Ada-Gcn5 acetyltransferase) complex, which is composed of 19 subunits TRA1, SPT7, TAF5, NGG1/ADA3, SGF73, SPT20/ADA5, SPT8, TAF12, TAF6, HFI1/ADA1, UBP8, GCN5, ADA2, SPT3, SGF29, TAF10, TAF9, SGF11 and SUS1. The SAGA complex is composed of 4 modules, namely the HAT (histone acetyltransferase) module (GCN5, ADA2, NGG1/ADA3 and SGF29), the DUB (deubiquitinating) module (UBP8, SGF11, SGF73 and SUS1), the core or TAF (TBP-associated factor) module (TAF5, TAF6, TAF9, TAF10 and TAF12), and the Tra1 or SPT (Suppressor of Ty) module (TRA1, HFI1/ADA1, SPT3, SPT7, SPT8 and SPT20/ADA5). The Tra1/SPT module binds activators, the core module recruits TBP (TATA-binding protein), the HAT module contains the histone H3 acetyltransferase GCN5, and the DUB module comprises the histone H2B deubiquitinase UBP8. Also identified in an altered form of SAGA, named SALSA (SAGA altered, Spt8 absent) or SLIK (SAGA-like) complex, which contains a C-terminal truncated form of SPT7 and is missing SPT8. However, it has been shown that the SAGA and SAGA-like SALSA/SLIK transcriptional coactivators are structurally and biochemically equivalent. Component of the 1.2 MDa TFIID complex, which is composed of TATA-binding protein (TBP) and the 14 TBP-associated factors (TAFs). It comprises 1 copy of each TAF1, TAF2, TAF3, TAF7, TAF8, TAF11, TAF13, 2 copies of each TAF4, TAF5, TAF6, TAF9, TAF10, TAF12, and 3 copies of TAF14. In TFIID, TAF12 heterodimerizes with TAF4, forming ultimately an octamer consisting of a TAF6-TAF9 heterotetramer core flanked by TAF4-TAF12 dimers on either side, similar to the histone H2A-H2B-H3-H4 octamer.

The protein localises to the nucleus. Functions as a component of both the DNA-binding general transcription initiation factor complex TFIID and the transcription coactivator SAGA complex. Binding of TFIID to a promoter (with or without TATA element) is the initial step in pre-initiation complex (PIC) formation. TFIID plays a key role in the regulation of gene expression by RNA polymerase II through different activities such as transcription activator interaction, core promoter recognition and selectivity, TFIIA and TFIIB interaction, chromatin modification (histone acetylation by TAF1), facilitation of DNA opening and initiation of transcription. SAGA acts as a general cofactor required for essentially all RNA polymerase II transcription. At the promoters, SAGA is required for transcription pre-initiation complex (PIC) recruitment. It influences RNA polymerase II transcriptional activity through different activities such as TBP interaction (via core/TAF module) and promoter selectivity, interaction with transcription activators (via Tra1/SPT module), and chromatin modification through histone acetylation (via HAT module) and deubiquitination (via DUB module). SAGA preferentially acetylates histones H3 (to form H3K9ac, H3K14ac, H3K18ac and H3K23ac) and H2B and deubiquitinates histone H2B. SAGA interacts with DNA via upstream activating sequences (UASs). Also identified in a modified version of SAGA named SALSA or SLIK. The cleavage of SPT7 and the absence of the SPT8 subunit in SLIK neither drive any major conformational differences in its structure compared with SAGA, nor significantly affect HAT, DUB, or DNA-binding activities. In Saccharomyces cerevisiae (strain ATCC 204508 / S288c) (Baker's yeast), this protein is SAGA complex/transcription factor TFIID complex subunit TAF12 (TAF12).